A 263-amino-acid chain; its full sequence is Probable ABC transporter permease protein ycf63 (263 aa).

Helical transmembrane passes span 43-63, 70-89, 150-170, 188-208, and 230-250; these read IVGP…SMVF, EFLY…IAFT, ILSI…AFVM, ISDF…IGFI, and SVVT…YFMF.

It belongs to the MlaE permease family.

It is found in the plastid. The protein resides in the chloroplast membrane. Its function is as follows. Could be part of an ABC transporter complex. The chain is Probable ABC transporter permease protein ycf63 (ycf63) from Pyropia yezoensis (Susabi-nori).